The following is a 236-amino-acid chain: Purine nucleoside phosphorylase DeoD-type 2 (236 aa).

His-5 contributes to the a purine D-ribonucleoside binding site. Residues Gly-21, Arg-25, Arg-44, and Arg-88 to Ser-91 each bind phosphate. A purine D-ribonucleoside-binding positions include Asp-180–Glu-182 and Ser-204–Asp-205. Asp-205 (proton donor) is an active-site residue.

It belongs to the PNP/UDP phosphorylase family. As to quaternary structure, homohexamer; trimer of homodimers.

It carries out the reaction a purine D-ribonucleoside + phosphate = a purine nucleobase + alpha-D-ribose 1-phosphate. The enzyme catalyses a purine 2'-deoxy-D-ribonucleoside + phosphate = a purine nucleobase + 2-deoxy-alpha-D-ribose 1-phosphate. Functionally, catalyzes the reversible phosphorolytic breakdown of the N-glycosidic bond in the beta-(deoxy)ribonucleoside molecules, with the formation of the corresponding free purine bases and pentose-1-phosphate. In Vibrio vulnificus (strain CMCP6), this protein is Purine nucleoside phosphorylase DeoD-type 2.